The sequence spans 220 residues: Uracil-DNA glycosylase 1 (220 aa).

Asp-65 functions as the Proton acceptor in the catalytic mechanism.

It belongs to the uracil-DNA glycosylase (UDG) superfamily. UNG family.

It localises to the cytoplasm. It catalyses the reaction Hydrolyzes single-stranded DNA or mismatched double-stranded DNA and polynucleotides, releasing free uracil.. Its function is as follows. Excises uracil residues from the DNA which can arise as a result of misincorporation of dUMP residues by DNA polymerase or due to deamination of cytosine. In Bacteroides fragilis (strain ATCC 25285 / DSM 2151 / CCUG 4856 / JCM 11019 / LMG 10263 / NCTC 9343 / Onslow / VPI 2553 / EN-2), this protein is Uracil-DNA glycosylase 1.